The chain runs to 708 residues: Ion-translocating oxidoreductase complex subunit C (708 aa).

2 consecutive 4Fe-4S ferredoxin-type domains span residues 369 to 397 and 407 to 436; these read GEPQ…QQLY and KATT…VQYF. [4Fe-4S] cluster contacts are provided by C377, C380, C383, C387, C416, C419, C422, and C426. The segment at 630–682 is disordered; the sequence is AKARKLEQQQANAEPEEQIDPRKAAVEAAIARAKARKLEQQQANAEPEEQIDP.

This sequence belongs to the 4Fe4S bacterial-type ferredoxin family. RnfC subfamily. The complex is composed of six subunits: RsxA, RsxB, RsxC, RsxD, RsxE and RsxG. The cofactor is [4Fe-4S] cluster.

The protein resides in the cell inner membrane. Part of a membrane-bound complex that couples electron transfer with translocation of ions across the membrane. Required to maintain the reduced state of SoxR. In Escherichia coli (strain UTI89 / UPEC), this protein is Ion-translocating oxidoreductase complex subunit C.